The following is a 682-amino-acid chain: Potassium-transporting ATPase ATP-binding subunit (682 aa).

A run of 4 helical transmembrane segments spans residues 34–54 (PVMFIVWIGSLLTTCISIAMA), 62–82 (ALFSVAISGWLWVTVLFANFA), 219–239 (IALTILLIALTIVFLLATATL), and 254–274 (VLVALLVCLIPTTIGGLLSAI). The active-site 4-aspartylphosphate intermediate is Asp307. ATP-binding positions include Asp344, Glu348, 377–384 (FTAQSRMS), and Lys395. Mg(2+) contacts are provided by Asp518 and Asp522. The next 3 membrane-spanning stretches (helical) occupy residues 588–608 (FAIIPAAFAVTYPQLNALNIM), 616–636 (AILSAVIFNALIIVFLIPLAL), and 656–676 (IYGLGGLLVPFIGIKVIDLLL).

The protein belongs to the cation transport ATPase (P-type) (TC 3.A.3) family. Type IA subfamily. In terms of assembly, the system is composed of three essential subunits: KdpA, KdpB and KdpC.

The protein localises to the cell inner membrane. It catalyses the reaction K(+)(out) + ATP + H2O = K(+)(in) + ADP + phosphate + H(+). Part of the high-affinity ATP-driven potassium transport (or Kdp) system, which catalyzes the hydrolysis of ATP coupled with the electrogenic transport of potassium into the cytoplasm. This subunit is responsible for energy coupling to the transport system and for the release of the potassium ions to the cytoplasm. The protein is Potassium-transporting ATPase ATP-binding subunit of Escherichia coli O157:H7 (strain EC4115 / EHEC).